We begin with the raw amino-acid sequence, 327 residues long: MEEEFKDKGLPPTLLHLIPDGREWKVKEADGEGSRNTNLDADEDKELELKLGLPGVQQEERAADSREKIQQQQRESSSEPSIGCFPTHSKPTTSIGTTGAKRGFFAIVGATLEGYNQSHRDTEECGKELTLGDENMAGERKKGCCPSPPCSAAAHSSNPQGRGAIPPVVGWPPIRSFRRNLTNGSSFKQSPERQNDEADDKAKPICKKRPLVKINMDGIPIGRKVDLQIYDSYQKLSSAVEELFRGFLEAQKDLSCAESGEQGAEDKIFSGLLDGTGVYTLVYEDNDGDRMLAGDIPWKVFVSTVKRLRVMRRSELPHDMIGADPVK.

3 disordered regions span residues 26–45, 52–98, and 180–202; these read VKEADGEGSRNTNLDADEDK, GLPG…IGTT, and NLTNGSSFKQSPERQNDEADDKA. Residues 49 to 53 carry the EAR-like (transcriptional repression) motif; that stretch reads LKLGL. The span at 58–69 shows a compositional bias: basic and acidic residues; sequence QEERAADSREKI. The segment covering 70-82 has biased composition (low complexity); that stretch reads QQQQRESSSEPSI. The segment covering 180 to 189 has biased composition (polar residues); that stretch reads NLTNGSSFKQ. Residues 190-202 show a composition bias toward basic and acidic residues; it reads SPERQNDEADDKA. The PB1 domain maps to 209–313; it reads RPLVKINMDG…TVKRLRVMRR (105 aa).

This sequence belongs to the Aux/IAA family. Homodimers and heterodimers. Highly expressed in flowers. Expressed in roots and etiolated seedlings.

The protein localises to the nucleus. Its function is as follows. Aux/IAA proteins are short-lived transcriptional factors that function as repressors of early auxin response genes at low auxin concentrations. The sequence is that of Auxin-responsive protein IAA18 (IAA18) from Oryza sativa subsp. japonica (Rice).